A 149-amino-acid polypeptide reads, in one-letter code: MHCPFCFAVDTKVIDSRLVGEGSSVRRRRQCLVCNERFTTFEVAELVMPRVVKSNDVREPFNEDKLRSGMLKALEKRPVSADDVEMAVNHIKTHLRGTGEREVASKMIGNLVMEQLKKLDKVAYIRFASVYRSFEDIKEFGEEIARLQD.

Residues 3–34 (CPFCFAVDTKVIDSRLVGEGSSVRRRRQCLVC) fold into a zinc finger. An ATP-cone domain is found at 49 to 139 (PRVVKSNDVR…VYRSFEDIKE (91 aa)).

The protein belongs to the NrdR family. Zn(2+) serves as cofactor.

In terms of biological role, negatively regulates transcription of bacterial ribonucleotide reductase nrd genes and operons by binding to NrdR-boxes. In Klebsiella pneumoniae (strain 342), this protein is Transcriptional repressor NrdR.